The sequence spans 134 residues: Glycine cleavage system H protein (134 aa).

The Lipoyl-binding domain occupies T24–Q106. K65 carries the post-translational modification N6-lipoyllysine.

This sequence belongs to the GcvH family. The glycine cleavage system is composed of four proteins: P, T, L and H. It depends on (R)-lipoate as a cofactor.

Functionally, the glycine cleavage system catalyzes the degradation of glycine. The H protein shuttles the methylamine group of glycine from the P protein to the T protein. In Mycobacterium tuberculosis (strain ATCC 25177 / H37Ra), this protein is Glycine cleavage system H protein.